The primary structure comprises 426 residues: Glutamate-1-semialdehyde 2,1-aminomutase (426 aa).

Lysine 263 bears the N6-(pyridoxal phosphate)lysine mark.

It belongs to the class-III pyridoxal-phosphate-dependent aminotransferase family. HemL subfamily. Homodimer. The cofactor is pyridoxal 5'-phosphate.

It is found in the cytoplasm. The enzyme catalyses (S)-4-amino-5-oxopentanoate = 5-aminolevulinate. It functions in the pathway porphyrin-containing compound metabolism; protoporphyrin-IX biosynthesis; 5-aminolevulinate from L-glutamyl-tRNA(Glu): step 2/2. The protein is Glutamate-1-semialdehyde 2,1-aminomutase of Caldicellulosiruptor bescii (strain ATCC BAA-1888 / DSM 6725 / KCTC 15123 / Z-1320) (Anaerocellum thermophilum).